We begin with the raw amino-acid sequence, 308 residues long: 50 kDa gamma-zein (308 aa).

Residues 1-19 (MKLVLVVLAFIALVSSVSC) form the signal peptide. Residues 27–159 (CGQQQSHEQQ…QPQQPQQYQQ (133 aa)) form a disordered region. Residues 55–119 (HHQQQQHQQQ…QHHQQSQGHV (65 aa)) show a composition bias toward low complexity. Basic and acidic residues predominate over residues 120 to 129 (QQHEQSHEQH). Over residues 130 to 159 (QGQSHEQQHQQQFQGHDKQQQPQQPQQYQQ) the composition is skewed to low complexity. Residue C286 is the site of GPI-anchor amidated cysteine attachment. Residues 287-308 (GLYHSYYQNNPCSSNDISGVCN) constitute a propeptide, removed in mature form.

It belongs to the gliadin/glutenin family. As to quaternary structure, interacts with OP10 (via N-terminus).

The protein localises to the cell membrane. Functionally, zeins are major seed storage proteins. This Zea mays (Maize) protein is 50 kDa gamma-zein.